The sequence spans 411 residues: POU domain, class 4, transcription factor 2 (411 aa).

A disordered region spans residues 29–95 (LHSASPGSSA…SEAMRRACLP (67 aa)). The segment covering 31 to 52 (SASPGSSAPAAPSASSPSSSSN) has biased composition (low complexity). Gly residues-rich tracts occupy residues 53–68 (AGGG…GGGR) and 76–86 (GSGGSGGGGGS). Residues 93–239 (CLPTPPSNIF…MHQAALSMAH (147 aa)) form a required for transcriptional activation region. Residues 112-121 (RAEALAAVDI) carry the POU-IV box motif. The span at 154–168 (SAASSSSVPISHPSA) shows a compositional bias: low complexity. The segment at 154–190 (SAASSSSVPISHPSALAGTHHHHHHHHHHHHQPHQAL) is disordered. The span at 172-186 (THHHHHHHHHHHHQP) shows a compositional bias: basic residues. The short motif at 173–187 (HHHHHHHHHHHHQPH) is the Nuclear speckle targeting signal element. A required for DNA-binding and transcriptional repression region spans residues 240–411 (AHGLPSHMGC…QKRMKYSAGI (172 aa)). In terms of domain architecture, POU-specific spans 252-329 (DVDADPRDLE…ILQAWLEEAE (78 aa)). The homeobox DNA-binding region spans 347–406 (KKRKRTSIAAPEKRSLEAYFAIQPRPSSEKIAAIAEKLDLKKNVVRVWFCNQRQKQKRMK).

This sequence belongs to the POU transcription factor family. Class-4 subfamily. As to quaternary structure, isoform 2: Interacts with POU4F1 isoform 1; this interaction inhibits both POU4F1 DNA-binding and transcriptional activities. Isoform 2: Interacts (C-terminus) with ESR1 (via DNA-binding domain); this interaction increases the estrogen receptor ESR1 transcriptional activity in a DNA- and ligand 17-beta-estradiol-independent manner. Isoform 2: Interacts (via C-terminus) with TP53 (via N-terminus). Interacts with DLX1 (via homeobox DNA-binding domain); this interaction suppresses DLX1-mediated transcriptional activity in postnatal retina enhancing retinal ganglion cell (RGC) differentiation. Interacts with DLX2 (via homeobox DNA-binding domain); this interaction enhances RGC differentiation. Isoform 1: Interacts (via C-terminus) with ISL1 (via C-terminus). Isoform 1: Interacts with ISL2. Isoform 1: Interacts with LHX2. In terms of tissue distribution, expressed in retinal ganglion cells (RGCs). Expressed in mature osteoclasts. Expressed in cells of layers of the superior colliculus and the adjacent periaqueductal gray (at protein level). Expressed in the brain, peripheral sensory nervous system and retina. Expressed in the optical, intermediate, and deep gray areas of the superior colliculus, the dorsal column of the mesencephalic and pontine central gray, and the lateral interpeduncular nucleus of the brain. Expressed predominantly in postmitotic, terminally differentiated neurons. Expressed in ganglion cell layer (GCL) of the retina.

The protein resides in the nucleus. Its subcellular location is the nucleus speckle. It localises to the cytoplasm. Functionally, tissue-specific DNA-binding transcription factor involved in the development and differentiation of target cells. Functions either as activator or repressor by modulating the rate of target gene transcription through RNA polymerase II enzyme in a promoter-dependent manner. Binds to the consensus octamer motif 5'-AT[A/T]A[T/A]T[A/T]A-3' of promoter of target genes. Plays a fundamental role in the gene regulatory network essential for retinal ganglion cell (RGC) differentiation. Binds to an octamer site to form a ternary complex with ISL1; cooperates positively with ISL1 and ISL2 to potentiate transcriptional activation of RGC target genes being involved in RGC fate commitment in the developing retina and RGC axon formation and pathfinding. Inhibits DLX1 and DLX2 transcriptional activities preventing DLX1- and DLX2-mediated ability to promote amacrine cell fate specification. In cooperation with TP53 potentiates transcriptional activation of BAX promoter activity increasing neuronal cell apoptosis. Negatively regulates BAX promoter activity in the absence of TP53. Acts as a transcriptional coactivator via its interaction with the transcription factor ESR1 by enhancing its effect on estrogen response element (ERE)-containing promoter. Antagonizes the transcriptional stimulatory activity of POU4F1 by preventing its binding to an octamer motif. Involved in TNFSF11-mediated terminal osteoclast differentiation. The sequence is that of POU domain, class 4, transcription factor 2 from Mus musculus (Mouse).